The following is a 403-amino-acid chain: S-adenosylmethionine synthase (403 aa).

His17 serves as a coordination point for ATP. Asp19 contributes to the Mg(2+) binding site. K(+) is bound at residue Glu45. L-methionine-binding residues include Glu58 and Gln104. Residues 104–114 (QSSDIAQGVNT) are flexible loop. Residues 179-181 (DGK), 250-251 (KF), Asp259, 265-266 (RK), Ala282, and Lys286 each bind ATP. Asp259 serves as a coordination point for L-methionine. Lys290 lines the L-methionine pocket.

It belongs to the AdoMet synthase family. Homotetramer; dimer of dimers. It depends on Mg(2+) as a cofactor. K(+) is required as a cofactor.

Its subcellular location is the cytoplasm. It catalyses the reaction L-methionine + ATP + H2O = S-adenosyl-L-methionine + phosphate + diphosphate. It functions in the pathway amino-acid biosynthesis; S-adenosyl-L-methionine biosynthesis; S-adenosyl-L-methionine from L-methionine: step 1/1. Its function is as follows. Catalyzes the formation of S-adenosylmethionine (AdoMet) from methionine and ATP. The overall synthetic reaction is composed of two sequential steps, AdoMet formation and the subsequent tripolyphosphate hydrolysis which occurs prior to release of AdoMet from the enzyme. In Mycobacterium leprae (strain Br4923), this protein is S-adenosylmethionine synthase.